Here is a 125-residue protein sequence, read N- to C-terminus: Fluoride-specific ion channel FluC (125 aa).

Transmembrane regions (helical) follow at residues 1–21 (MIQA…RYYV), 32–52 (AFPW…GVFA), 68–88 (LLIT…LDAI), and 101–121 (IYTV…LAVM). G75 and T78 together coordinate Na(+).

Belongs to the fluoride channel Fluc/FEX (TC 1.A.43) family.

It is found in the cell inner membrane. It carries out the reaction fluoride(in) = fluoride(out). With respect to regulation, na(+) is not transported, but it plays an essential structural role and its presence is essential for fluoride channel function. Functionally, fluoride-specific ion channel. Important for reducing fluoride concentration in the cell, thus reducing its toxicity. The sequence is that of Fluoride-specific ion channel FluC from Rhizobium leguminosarum bv. trifolii (strain WSM2304).